A 580-amino-acid chain; its full sequence is Netrin-3 (580 aa).

The first 27 residues, 1 to 27 (MPGWPWGLLLTAGTLFAALSPGPPAPA), serve as a signal peptide directing secretion. Residues 36 to 254 (APRGCVPGLV…AATDLQVGGR (219 aa)) form the Laminin N-terminal domain. The segment at 62 to 83 (PATRACDASDPRRAHSPALLTS) is disordered. Cystine bridges form between Cys92-Cys125, Cys255-Cys264, Cys257-Cys274, Cys276-Cys285, Cys288-Cys308, Cys311-Cys320, Cys313-Cys338, Cys341-Cys350, Cys353-Cys371, Cys374-Cys386, Cys376-Cys393, Cys395-Cys404, Cys407-Cys421, Cys441-Cys514, and Cys460-Cys577. Asn104 carries an N-linked (GlcNAc...) asparagine glycan. 3 consecutive Laminin EGF-like domains span residues 255–308 (CKCN…SHAC), 311–371 (CSCN…RRAC), and 374–421 (CDCH…VAPC). Residue Asn387 is glycosylated (N-linked (GlcNAc...) asparagine). Residues 441-577 (CDSHCKPARG…LQRRERRGRC (137 aa)) form the NTR domain. The Cell attachment site; atypical signature appears at 500–502 (RGS).

As to expression, spinal cord.

The protein localises to the secreted. It localises to the extracellular space. It is found in the extracellular matrix. In terms of biological role, netrins control guidance of CNS commissural axons and peripheral motor axons. This chain is Netrin-3 (NTN3), found in Homo sapiens (Human).